The chain runs to 184 residues: Peptide deformylase (184 aa).

Fe cation is bound by residues cysteine 98 and histidine 140. The active site involves glutamate 141. Histidine 144 contacts Fe cation.

This sequence belongs to the polypeptide deformylase family. The cofactor is Fe(2+).

The enzyme catalyses N-terminal N-formyl-L-methionyl-[peptide] + H2O = N-terminal L-methionyl-[peptide] + formate. Its function is as follows. Removes the formyl group from the N-terminal Met of newly synthesized proteins. Requires at least a dipeptide for an efficient rate of reaction. N-terminal L-methionine is a prerequisite for activity but the enzyme has broad specificity at other positions. The polypeptide is Peptide deformylase (Bacteroides fragilis (strain ATCC 25285 / DSM 2151 / CCUG 4856 / JCM 11019 / LMG 10263 / NCTC 9343 / Onslow / VPI 2553 / EN-2)).